The following is a 393-amino-acid chain: Isocitrate dehydrogenase [NAD] subunit gamma 1, mitochondrial (393 aa).

A mitochondrion-targeting transit peptide spans M1–I39. T120 is a binding site for citrate. S130 carries the phosphoserine modification. N133 serves as a coordination point for citrate. The substrate site is built by R136 and R167. At K206 the chain carries N6-acetyllysine. Residue K226 is modified to N6-succinyllysine. D254 lines the substrate pocket. D254 is a Mn(2+) binding site. ADP is bound by residues N312, T313, and N324.

The protein belongs to the isocitrate and isopropylmalate dehydrogenases family. Heterooligomer of subunits alpha (IDH3A), beta (IDH3B), and gamma (IDH3G) in the apparent ratio of 2:1:1. The heterodimer containing one IDH3A and one IDH3B subunit and the heterodimer containing one IDH3A and one IDH3G subunit assemble into a heterotetramer (which contains two subunits of IDH3A, one of IDH3B and one of IDH3G) and further into the heterooctamer. The cofactor is Mg(2+). Mn(2+) serves as cofactor.

The protein localises to the mitochondrion. The heterotetramer and the heterodimer composed of IDH3A and IDH3G subunits can be allosterically activated by citrate (CIT) or/and ADP, and the two activators can act independently or synergistically. The heterodimer composed of IDH3A and IDH3B subunits cannot be allosterically regulated and the allosteric regulation of the heterotetramer is through the IDH3G subunit and not the IDH3B subunit. The IDH3G subunit contains the allosteric site which consists of a CIT-binding site and an ADP-binding site, and the binding of CIT and ADP causes conformational changes at the allosteric site which are transmitted to the active site in the catalytic subunit (IDH3A) through a cascade of conformational changes at the heterodimer interface, leading to stabilization of the isocitrate-binding at the active site and thus activation of the enzyme. ATP can activate the heterotetramer and the heterodimer composed of IDH3A and IDH3G subunits at low concentrations but inhibits their activities at high concentrations, whereas ATP exhibits only inhibitory effect on the heterodimer composed of IDH3A and IDH3B subunits. In terms of biological role, regulatory subunit which plays a role in the allosteric regulation of the enzyme catalyzing the decarboxylation of isocitrate (ICT) into alpha-ketoglutarate. The heterodimer composed of the alpha (IDH3A) and beta (IDH3B) subunits and the heterodimer composed of the alpha (IDH3A) and gamma (IDH3G) subunits, have considerable basal activity but the full activity of the heterotetramer (containing two subunits of IDH3A, one of IDH3B and one of IDH3G) requires the assembly and cooperative function of both heterodimers. The chain is Isocitrate dehydrogenase [NAD] subunit gamma 1, mitochondrial (Idh3g) from Rattus norvegicus (Rat).